The chain runs to 199 residues: MSQSHFFAYLSRLKLINRWPLMRNVRTENVSEHSLQVAMVAHALAVIKNRKFQGNVNPERIALLAMYHDASEVLTGDLPTPVKYFNSQIAHEYKAIEKIAQQKLIAMVPEELQDIFAPLLDEHHYTEDEKSLVKQADALCAYLKCLEELSAGNNEFLLAKSRLEKTLAQRHSAEMDYFMQVFVPSFHLSLDEISQDSPL.

Residues 18–19 (RW) and His33 each bind substrate. Residues 30 to 142 (VSEHSLQVAM…VKQADALCAY (113 aa)) form the HD domain. A divalent metal cation is bound by residues His33, His68, and Asp69. Substrate is bound by residues Asp69, 77 to 80 (DLPT), and Asp137. An a divalent metal cation-binding site is contributed by Asp137.

This sequence belongs to the 5DNU family. In terms of assembly, homodimer. A divalent metal cation serves as cofactor.

Its subcellular location is the cytoplasm. The catalysed reaction is a 2'-deoxyribonucleoside 5'-phosphate + H2O = a 2'-deoxyribonucleoside + phosphate. Functionally, catalyzes the strictly specific dephosphorylation of 2'-deoxyribonucleoside 5'-monophosphates. The chain is 5'-deoxynucleotidase ESA_00928 from Cronobacter sakazakii (strain ATCC BAA-894) (Enterobacter sakazakii).